The primary structure comprises 252 residues: Octanoyltransferase (252 aa).

Positions 1–21 (MPSAPAAPAAPAAPDAAASVA) are enriched in low complexity. Residues 1 to 22 (MPSAPAAPAAPAAPDAAASVAP) are disordered. Residues 56-237 (PDTDDEIWVV…RLIAHLDGAT (182 aa)) enclose the BPL/LPL catalytic domain. Substrate-binding positions include 96–103 (RGGQITYH), 168–170 (ALG), and 181–183 (GLS). Catalysis depends on C199, which acts as the Acyl-thioester intermediate.

Belongs to the LipB family.

The protein resides in the cytoplasm. It carries out the reaction octanoyl-[ACP] + L-lysyl-[protein] = N(6)-octanoyl-L-lysyl-[protein] + holo-[ACP] + H(+). The protein operates within protein modification; protein lipoylation via endogenous pathway; protein N(6)-(lipoyl)lysine from octanoyl-[acyl-carrier-protein]: step 1/2. In terms of biological role, catalyzes the transfer of endogenously produced octanoic acid from octanoyl-acyl-carrier-protein onto the lipoyl domains of lipoate-dependent enzymes. Lipoyl-ACP can also act as a substrate although octanoyl-ACP is likely to be the physiological substrate. The protein is Octanoyltransferase of Burkholderia pseudomallei (strain 668).